The primary structure comprises 524 residues: MSLCLVIACMVTSWIFLHRWGQRNKSGPKTWPLVGAAIEQLTNFDRMHDWLVEYLYNSRTVVVPMPFTTYTYIADPINVEYVLKTNFSNYPKGETYHSYMEVLLGDGIFNSDGELWRKQRKTASFEFASKNLRDFSTVVFKEYSLKLFTILSQASFKEQQVDMQELLMRMTLDSICKVGFGVEIGTLAPELPENHFAKAFDTANIIVTLRFIDPLWKMKKFLNIGSEALLGKSIKVVNDFTYSVIRRRKAELLEAQISPTNNNNNNNNKVKHDILSRFIEISDDPDSKETEKSLRDIVLNFVIAGRDTTATTLTWAIYMIMMNENVAEKLYSELQELEKESAEATNTSLHQYDTEDFNSFNEKVTEFAGLLNYDSLGKLHYLHAVITETLRLYPAVPQDPKGVLEDDMLPNGTKVKAGGMVTYVPYSMGRMEYNWGSDAALFKPERWLKDGVFQNASPFKFTAFQAGPRICLGKDSAYLQMKMAMAILCRFYKFHLVPNHPVKYRMMTILSMAHGLKVTVSRRS.

Residues 2–22 form a helical membrane-spanning segment; that stretch reads SLCLVIACMVTSWIFLHRWGQ. Cys-471 serves as a coordination point for heme.

It belongs to the cytochrome P450 family. The cofactor is heme.

It is found in the membrane. The enzyme catalyses an omega-methyl-long-chain fatty acid + reduced [NADPH--hemoprotein reductase] + O2 = an omega-hydroxy-long-chain fatty acid + oxidized [NADPH--hemoprotein reductase] + H2O + H(+). Its function is as follows. Involved in pollen wall development. Catalyzes the conversion of long-chain fatty acids to the corresponding omega-hydroxylated fatty acids. Omega-hydroxylated fatty acids, together with in-chain hydroxylated fatty acids, are key monomeric aliphatic building blocks for sporopollenin synthesis during exine formation. The polypeptide is Cytochrome P450 704B1 (CYP704B1) (Arabidopsis thaliana (Mouse-ear cress)).